A 385-amino-acid polypeptide reads, in one-letter code: Transcription termination factor 2, mitochondrial (385 aa).

Residues 1 to 35 (MSWRLLTGYQLCRLRLFRKPQPALKIRPSSVCVTY) constitute a mitochondrion transit peptide.

This sequence belongs to the mTERF family. In terms of assembly, monomer.

Its subcellular location is the mitochondrion matrix. The protein localises to the mitochondrion nucleoid. In terms of biological role, binds mitochondrial DNA and plays a role in the regulation of transcription of mitochondrial mRNA and rRNA species. In Rattus norvegicus (Rat), this protein is Transcription termination factor 2, mitochondrial (Mterf2).